The chain runs to 216 residues: Uracil phosphoribosyltransferase (216 aa).

Residues R32, R41, 75 to 78 (LGKI), and K77 contribute to the GTP site. R85 contacts 5-phospho-alpha-D-ribose 1-diphosphate. R102 provides a ligand contact to GTP. R110 contacts 5-phospho-alpha-D-ribose 1-diphosphate. Position 131 (R131) interacts with GTP. Residues D137 and 137–145 (DPMLATGGS) contribute to the 5-phospho-alpha-D-ribose 1-diphosphate site. Y201 contacts D-ribose 5-phosphate. Uracil-binding positions include L202 and 207–209 (GDF). D208 contributes to the 5-phospho-alpha-D-ribose 1-diphosphate binding site.

This sequence belongs to the UPRTase family. Requires Mg(2+) as cofactor.

The enzyme catalyses UMP + diphosphate = 5-phospho-alpha-D-ribose 1-diphosphate + uracil. It participates in pyrimidine metabolism; UMP biosynthesis via salvage pathway; UMP from uracil: step 1/1. Its activity is regulated as follows. Allosterically activated by GTP. Functionally, catalyzes the conversion of uracil and 5-phospho-alpha-D-ribose 1-diphosphate (PRPP) to UMP and diphosphate. This is Uracil phosphoribosyltransferase (FUR1) from Lachancea kluyveri (Yeast).